Reading from the N-terminus, the 371-residue chain is Chaperone protein DnaJ (371 aa).

One can recognise a J domain in the interval 5 to 69 (DYYEVLGLSK…QKRAQYDQFG (65 aa)). Residues 133–215 (GKELNVEIPV…CHGSSKVRKR (83 aa)) form a CR-type zinc finger. Zn(2+)-binding residues include Cys146, Cys149, Cys163, Cys166, Cys189, Cys192, Cys203, and Cys206. CXXCXGXG motif repeat units follow at residues 146-153 (CDTCKGSG), 163-170 (CKHCSGSG), 189-196 (CGHCSGTG), and 203-210 (CTTCHGSS).

The protein belongs to the DnaJ family. Homodimer. It depends on Zn(2+) as a cofactor.

It localises to the cytoplasm. Functionally, participates actively in the response to hyperosmotic and heat shock by preventing the aggregation of stress-denatured proteins and by disaggregating proteins, also in an autonomous, DnaK-independent fashion. Unfolded proteins bind initially to DnaJ; upon interaction with the DnaJ-bound protein, DnaK hydrolyzes its bound ATP, resulting in the formation of a stable complex. GrpE releases ADP from DnaK; ATP binding to DnaK triggers the release of the substrate protein, thus completing the reaction cycle. Several rounds of ATP-dependent interactions between DnaJ, DnaK and GrpE are required for fully efficient folding. Also involved, together with DnaK and GrpE, in the DNA replication of plasmids through activation of initiation proteins. In Bacillus cereus (strain ATCC 14579 / DSM 31 / CCUG 7414 / JCM 2152 / NBRC 15305 / NCIMB 9373 / NCTC 2599 / NRRL B-3711), this protein is Chaperone protein DnaJ.